The primary structure comprises 735 residues: Muskelin (735 aa).

At alanine 2 the chain carries N-acetylalanine. Residues 172–204 form the LisH domain; sequence REQEAIRLCLKHFRQHNYTEAFESLQKKTKIAL. Residues 206–258 form the CTLH domain; it reads HPMLTDIHDKLVLKGDFDACEELIEKAVNDGLFNQYISQQEYKPRWSQIIPKS. Kelch repeat units follow at residues 284–330, 339–391, 408–458, 469–515, 526–578, and 597–651; these read TVYL…SCHK, QIYT…FDHQ, ILTC…SRIG, CLYV…TGFT, EIHV…SLQE, and VHYL…AQMD.

Homodimer; may form higher oligomers. Identified in the CTLH complex that contains GID4, RANBP9 and/or RANBP10, MKLN1, MAEA, RMND5A (or alternatively its paralog RMND5B), GID8, ARMC8, WDR26 and YPEL5. Within this complex, MAEA, RMND5A (or alternatively its paralog RMND5B), GID8, WDR26, and RANBP9 and/or RANBP10 form the catalytic core, while GID4, MKLN1, ARMC8 and YPEL5 have ancillary roles. Interacts with RANBP9. Part of a complex consisting of RANBP9, MKLN1 and GID8. Interacts with GABRA1. Interacts with the C-terminal tail of PTGER3.

It is found in the cytoplasm. Its subcellular location is the cytosol. The protein localises to the nucleus. The protein resides in the nucleoplasm. It localises to the cell projection. It is found in the ruffle. Its subcellular location is the cell cortex. The protein localises to the synapse. The protein resides in the postsynapse. Its function is as follows. Component of the CTLH E3 ubiquitin-protein ligase complex that selectively accepts ubiquitin from UBE2H and mediates ubiquitination and subsequent proteasomal degradation of the transcription factor HBP1. Required for internalization of the GABA receptor GABRA1 from the cell membrane via endosomes and subsequent GABRA1 degradation. Acts as a mediator of cell spreading and cytoskeletal responses to the extracellular matrix component THBS1. The protein is Muskelin (MKLN1) of Pongo abelii (Sumatran orangutan).